We begin with the raw amino-acid sequence, 183 residues long: uncharacterized protein (183 aa).

One can recognise a GGDEF domain in the interval 55–183 (PRAAVLLVDL…RSRRGSRPAR (129 aa)).

Its function is as follows. Might be involved in pSAM2 replication control. This is an uncharacterized protein from Streptomyces ambofaciens.